A 337-amino-acid polypeptide reads, in one-letter code: Phosphoenolpyruvate transferase (337 aa).

Asp-69 lines the 7,8-didemethyl-8-hydroxy-5-deazariboflavin pocket.

Belongs to the CofD family. Homodimer. The cofactor is Mg(2+).

The enzyme catalyses enolpyruvoyl-2-diphospho-5'-guanosine + 7,8-didemethyl-8-hydroxy-5-deazariboflavin = dehydro coenzyme F420-0 + GMP + H(+). It functions in the pathway cofactor biosynthesis; coenzyme F420 biosynthesis. Functionally, catalyzes the transfer of the phosphoenolpyruvate moiety from enoylpyruvoyl-2-diphospho-5'-guanosine (EPPG) to 7,8-didemethyl-8-hydroxy-5-deazariboflavin (FO) with the formation of dehydro coenzyme F420-0 and GMP. The sequence is that of Phosphoenolpyruvate transferase from Mycobacterium avium (strain 104).